A 199-amino-acid chain; its full sequence is NAD(P)H dehydrogenase (quinone) (199 aa).

The Flavodoxin-like domain occupies valine 4–isoleucine 190. Residues serine 10–isoleucine 15 and threonine 78–phenylalanine 80 each bind FMN. NAD(+) is bound at residue tyrosine 12. Tryptophan 98 lines the substrate pocket. FMN-binding positions include serine 113 to glycine 119 and histidine 134.

This sequence belongs to the WrbA family. FMN is required as a cofactor.

The catalysed reaction is a quinone + NADH + H(+) = a quinol + NAD(+). It catalyses the reaction a quinone + NADPH + H(+) = a quinol + NADP(+). The sequence is that of NAD(P)H dehydrogenase (quinone) from Rhodopseudomonas palustris (strain BisB18).